The sequence spans 1019 residues: Probable LRR receptor-like serine/threonine-protein kinase At1g29720 (1019 aa).

A signal peptide spans 1–19; it reads MSIILWSFFLFFTIILSSL. Topologically, residues 20–615 are extracellular; the sequence is TNITTLASFS…EKTKHHIKYP (596 aa). Asn-21, Asn-79, and Asn-90 each carry an N-linked (GlcNAc...) asparagine glycan. LRR repeat units lie at residues 93 to 117, 118 to 141, 143 to 165, 166 to 189, 190 to 212, 214 to 236, 237 to 261, 263 to 283, 284 to 307, 308 to 330, 332 to 351, 352 to 374, and 375 to 398; these read ICRI…LTKL, PYLK…WAKM, YLTS…LQNF, KNLT…LGNL, TSLT…TLAR, VNLE…YIGN, WTRL…VVRL, NLLE…NLSS, KGLK…IWNL, TDLK…VQNP, KNIY…GGLL, NSQS…QKGS, and TINT…AVPA. 3 N-linked (GlcNAc...) asparagine glycosylation sites follow: Asn-153, Asn-167, and Asn-188. N-linked (GlcNAc...) asparagine glycans are attached at residues Asn-225 and Asn-236. Residues Asn-280 and Asn-306 are each glycosylated (N-linked (GlcNAc...) asparagine). N-linked (GlcNAc...) asparagine glycans are attached at residues Asn-363, Asn-387, Asn-469, and Asn-558. A helical transmembrane segment spans residues 616-636; it reads LILGASGALVTIVLLAVGIYA. Residues 637–1019 lie on the Cytoplasmic side of the membrane; it reads RGIYRRDNNR…STVENSSSSL (383 aa). The 274-residue stretch at 673-946 folds into the Protein kinase domain; the sequence is FDQANKLGEG…EAVKMLEGEI (274 aa). Residues 679-687 and Lys-701 contribute to the ATP site; that span reads LGEGGFGSV. Tyr-746 carries the post-translational modification Phosphotyrosine. Residue Asp-797 is the Proton acceptor of the active site. Ser-830 bears the Phosphoserine mark. 2 positions are modified to phosphothreonine: Thr-831 and Thr-836. Residue Tyr-844 is modified to Phosphotyrosine.

This sequence belongs to the protein kinase superfamily. Ser/Thr protein kinase family.

Its subcellular location is the cell membrane. The catalysed reaction is L-seryl-[protein] + ATP = O-phospho-L-seryl-[protein] + ADP + H(+). It carries out the reaction L-threonyl-[protein] + ATP = O-phospho-L-threonyl-[protein] + ADP + H(+). This Arabidopsis thaliana (Mouse-ear cress) protein is Probable LRR receptor-like serine/threonine-protein kinase At1g29720 (RFK1).